A 736-amino-acid polypeptide reads, in one-letter code: Catalase-peroxidase (736 aa).

A disordered region spans residues 1 to 25; sequence MSENGKCPVTGKTSKPVAGGGTSNQ. Residues 96–224 constitute a cross-link (tryptophyl-tyrosyl-methioninium (Trp-Tyr) (with M-250)); that stretch reads WHSAGTYRMG…LAAVQMGLIY (129 aa). Histidine 97 acts as the Proton acceptor in catalysis. The tryptophyl-tyrosyl-methioninium (Tyr-Met) (with W-96) cross-link spans 224 to 250; that stretch reads YVNPEGPDGNPDPIASGKDVRETFARM. Histidine 265 is a heme b binding site. Residues 294-313 are disordered; it reads GWKSSHGRGKGGDTISSGIE.

The protein belongs to the peroxidase family. Peroxidase/catalase subfamily. In terms of assembly, homodimer or homotetramer. Requires heme b as cofactor. In terms of processing, formation of the three residue Trp-Tyr-Met cross-link is important for the catalase, but not the peroxidase activity of the enzyme.

The catalysed reaction is H2O2 + AH2 = A + 2 H2O. It carries out the reaction 2 H2O2 = O2 + 2 H2O. In terms of biological role, bifunctional enzyme with both catalase and broad-spectrum peroxidase activity. This Desulfatibacillum aliphaticivorans protein is Catalase-peroxidase.